The chain runs to 299 residues: Class II hydrophobin C (299 aa).

The first 17 residues, 1–17 (MKFLTVAAAIFASTSLA), serve as a signal peptide directing secretion. Residues asparagine 39, asparagine 78, and asparagine 91 are each glycosylated (N-linked (GlcNAc...) asparagine). Disulfide bonds link cysteine 232–cysteine 281, cysteine 242–cysteine 272, cysteine 243–cysteine 255, and cysteine 282–cysteine 293.

This sequence belongs to the cerato-ulmin hydrophobin family.

Its subcellular location is the secreted. It localises to the cell wall. The protein localises to the vacuole. It is found in the cytoplasmic vesicle. Functionally, aerial growth, conidiation, and dispersal of filamentous fungi in the environment rely upon a capability of their secreting small amphipathic proteins called hydrophobins (HPBs) with low sequence identity. Class I can self-assemble into an outermost layer of rodlet bundles on aerial cell surfaces, conferring cellular hydrophobicity that supports fungal growth, development and dispersal; whereas Class II form highly ordered films at water-air interfaces through intermolecular interactions but contribute nothing to the rodlet structure. Hyd2C contributes to certain cell wall-related features, such as hydrophobicity but is not involved in cell wall-related events during fungal proliferation in host hemocoel. Does not contribute to conidial hydrophobicity. Involved actively in the asexual development. This is Class II hydrophobin C from Beauveria bassiana (strain ARSEF 2860) (White muscardine disease fungus).